The primary structure comprises 243 residues: Phosphoribosylaminoimidazole-succinocarboxamide synthase (243 aa).

This sequence belongs to the SAICAR synthetase family.

The enzyme catalyses 5-amino-1-(5-phospho-D-ribosyl)imidazole-4-carboxylate + L-aspartate + ATP = (2S)-2-[5-amino-1-(5-phospho-beta-D-ribosyl)imidazole-4-carboxamido]succinate + ADP + phosphate + 2 H(+). The protein operates within purine metabolism; IMP biosynthesis via de novo pathway; 5-amino-1-(5-phospho-D-ribosyl)imidazole-4-carboxamide from 5-amino-1-(5-phospho-D-ribosyl)imidazole-4-carboxylate: step 1/2. The protein is Phosphoribosylaminoimidazole-succinocarboxamide synthase of Prochlorococcus marinus (strain MIT 9211).